An 863-amino-acid polypeptide reads, in one-letter code: DNA mismatch repair protein MutS 2 (863 aa).

Residue 626–633 (GPNMSGKS) coordinates ATP.

This sequence belongs to the DNA mismatch repair MutS family.

Its function is as follows. This protein is involved in the repair of mismatches in DNA. It is possible that it carries out the mismatch recognition step. This protein has a weak ATPase activity. The polypeptide is DNA mismatch repair protein MutS 2 (mutS2) (Halobacterium salinarum (strain ATCC 700922 / JCM 11081 / NRC-1) (Halobacterium halobium)).